Reading from the N-terminus, the 216-residue chain is Large ribosomal subunit protein uL3 (216 aa).

Gln157 bears the N5-methylglutamine mark.

It belongs to the universal ribosomal protein uL3 family. Part of the 50S ribosomal subunit. Forms a cluster with proteins L14 and L19. Post-translationally, methylated by PrmB.

One of the primary rRNA binding proteins, it binds directly near the 3'-end of the 23S rRNA, where it nucleates assembly of the 50S subunit. In Xanthomonas campestris pv. campestris (strain 8004), this protein is Large ribosomal subunit protein uL3.